The sequence spans 286 residues: Nucleotide-binding protein PSPA7_5038 (286 aa).

8–15 is a binding site for ATP; that stretch reads GRSGSGKS. Position 60–63 (60–63) interacts with GTP; the sequence is DARN.

Belongs to the RapZ-like family.

Functionally, displays ATPase and GTPase activities. This Pseudomonas paraeruginosa (strain DSM 24068 / PA7) (Pseudomonas aeruginosa (strain PA7)) protein is Nucleotide-binding protein PSPA7_5038.